A 111-amino-acid chain; its full sequence is Aspartate 1-decarboxylase (111 aa).

Ser-25 acts as the Schiff-base intermediate with substrate; via pyruvic acid in catalysis. Pyruvic acid (Ser) is present on Ser-25. Residue Thr-57 participates in substrate binding. Tyr-58 acts as the Proton donor in catalysis. 73 to 75 (GPA) contributes to the substrate binding site.

The protein belongs to the PanD family. Heterooctamer of four alpha and four beta subunits. Pyruvate serves as cofactor. Is synthesized initially as an inactive proenzyme, which is activated by self-cleavage at a specific serine bond to produce a beta-subunit with a hydroxyl group at its C-terminus and an alpha-subunit with a pyruvoyl group at its N-terminus.

The protein localises to the cytoplasm. It carries out the reaction L-aspartate + H(+) = beta-alanine + CO2. It participates in cofactor biosynthesis; (R)-pantothenate biosynthesis; beta-alanine from L-aspartate: step 1/1. Its function is as follows. Catalyzes the pyruvoyl-dependent decarboxylation of aspartate to produce beta-alanine. The protein is Aspartate 1-decarboxylase of Francisella tularensis subsp. tularensis (strain FSC 198).